The following is a 517-amino-acid chain: Sterol 14-alpha demethylase CYP51C (517 aa).

Residues 10-30 (TLPLSVSIPLTTSIIIILSIV) traverse the membrane as a helical segment. A lanosterol-binding site is contributed by Tyr-115. Position 300 (Gly-300) interacts with itraconazole. Residue Cys-458 coordinates heme.

The protein belongs to the cytochrome P450 family. It depends on heme as a cofactor.

It is found in the endoplasmic reticulum membrane. Its pathway is steroid metabolism; ergosterol biosynthesis. Its function is as follows. Together with cyp51A and cyp51B, encodes the sterol 14alpha-demethylase that plays a critical role in the third module of ergosterol biosynthesis pathway, being ergosterol the major sterol component in fungal membranes that participates in a variety of functions. Cyp51C does not seem to encode an active sterol 14-alpha-demethylase, but can impact indirectly on sterol 14alpha-demethylation, and is required for full virulence on host wheat ears, but not on Arabidopsis floral tissue or the fruits of apple and tomato. The third module or late pathway involves the ergosterol synthesis itself through consecutive reactions that mainly occur in the endoplasmic reticulum (ER) membrane. In filamentous fungi, during the initial step of this module, lanosterol (lanosta-8,24-dien-3beta-ol) can be metabolized to eburicol. Sterol 14alpha-demethylase catalyzes the three-step oxidative removal of the 14alpha-methyl group (C-32) of both these sterols in the form of formate, and converts eburicol and lanosterol to 14-demethyleburicol (4,4,24-trimethylergosta-8,14,24(28)-trienol) and 4,4-dimethyl-5alpha-cholesta-8,14,24-trien-3beta-ol, respectively, which are further metabolized by other enzymes in the pathway to ergosterol. The protein is Sterol 14-alpha demethylase CYP51C of Gibberella zeae (strain ATCC MYA-4620 / CBS 123657 / FGSC 9075 / NRRL 31084 / PH-1) (Wheat head blight fungus).